A 213-amino-acid chain; its full sequence is Deoxyribose-phosphate aldolase (213 aa).

Residue D89 is the Proton donor/acceptor of the active site. The Schiff-base intermediate with acetaldehyde role is filled by K151. Catalysis depends on K180, which acts as the Proton donor/acceptor.

This sequence belongs to the DeoC/FbaB aldolase family. DeoC type 1 subfamily.

The protein resides in the cytoplasm. The catalysed reaction is 2-deoxy-D-ribose 5-phosphate = D-glyceraldehyde 3-phosphate + acetaldehyde. It participates in carbohydrate degradation; 2-deoxy-D-ribose 1-phosphate degradation; D-glyceraldehyde 3-phosphate and acetaldehyde from 2-deoxy-alpha-D-ribose 1-phosphate: step 2/2. Functionally, catalyzes a reversible aldol reaction between acetaldehyde and D-glyceraldehyde 3-phosphate to generate 2-deoxy-D-ribose 5-phosphate. The sequence is that of Deoxyribose-phosphate aldolase from Finegoldia magna (strain ATCC 29328 / DSM 20472 / WAL 2508) (Peptostreptococcus magnus).